The primary structure comprises 68 residues: Large ribosomal subunit protein uL29 (68 aa).

The protein belongs to the universal ribosomal protein uL29 family.

This chain is Large ribosomal subunit protein uL29 (rpl29), found in Archaeoglobus fulgidus (strain ATCC 49558 / DSM 4304 / JCM 9628 / NBRC 100126 / VC-16).